The primary structure comprises 748 residues: Polyribonucleotide nucleotidyltransferase (748 aa).

Aspartate 484 and aspartate 490 together coordinate Mg(2+). One can recognise a KH domain in the interval 551 to 610 (PRIETMSVPKDKIRDVIGTGGKVIREIVATTGAKVDIEDDGTVRLSSSDPANIEAAREWI). The S1 motif domain occupies 620–688 (GKIYNGKVVN…NRGKVRLSMR (69 aa)). The disordered stretch occupies residues 693–748 (ETGAELDDNRPPRENAERRGGERPRRDRGPRRESGDRPARRDMEPEFAPAFLRKDS). Positions 699-736 (DDNRPPRENAERRGGERPRRDRGPRRESGDRPARRDME) are enriched in basic and acidic residues.

Belongs to the polyribonucleotide nucleotidyltransferase family. Mg(2+) is required as a cofactor.

The protein resides in the cytoplasm. It carries out the reaction RNA(n+1) + phosphate = RNA(n) + a ribonucleoside 5'-diphosphate. Its function is as follows. Involved in mRNA degradation. Catalyzes the phosphorolysis of single-stranded polyribonucleotides processively in the 3'- to 5'-direction. The chain is Polyribonucleotide nucleotidyltransferase from Zymomonas mobilis subsp. mobilis (strain ATCC 31821 / ZM4 / CP4).